The sequence spans 298 residues: Urease accessory protein UreD (298 aa).

This sequence belongs to the UreD family. As to quaternary structure, ureD, UreF and UreG form a complex that acts as a GTP-hydrolysis-dependent molecular chaperone, activating the urease apoprotein by helping to assemble the nickel containing metallocenter of UreC. The UreE protein probably delivers the nickel.

The protein resides in the cytoplasm. In terms of biological role, required for maturation of urease via the functional incorporation of the urease nickel metallocenter. This is Urease accessory protein UreD from Frankia alni (strain DSM 45986 / CECT 9034 / ACN14a).